The following is a 60-amino-acid chain: Mastoparan-VT3 (60 aa).

The first 27 residues, 1 to 27 (MKNTILILFTAFIALLGFFGMSAEALA), serve as a signal peptide directing secretion. AXPX repeat units lie at residues 27–30 (ADPK), 31–34 (ADPL), 35–38 (AGPN), and 41–44 (ADPE). Residues 28-45 (DPKADPLAGPNPDADPEA) constitute a propeptide that is removed on maturation. At L59 the chain carries Leucine amide.

Belongs to the MCD family. Mastoparan subfamily. As to expression, expressed by the venom gland.

The protein resides in the secreted. In terms of biological role, the synthetic peptide shows antimicrobial activities against Gram-negative bacteria (but not against all strains tested), Gram-positive bacteria (all strains tested) and the fungi C.albicans and C.parapsilosis. Exhibits moderate hemolytic activity (25% at 100 ug/ml) against washed human erythrocytes. In Vespa tropica (Greater banded hornet), this protein is Mastoparan-VT3.